A 220-amino-acid chain; its full sequence is ATP-dependent Clp protease proteolytic subunit (220 aa).

Catalysis depends on Ser-125, which acts as the Nucleophile. Residue His-150 is part of the active site.

It belongs to the peptidase S14 family. As to quaternary structure, fourteen ClpP subunits assemble into 2 heptameric rings which stack back to back to give a disk-like structure with a central cavity, resembling the structure of eukaryotic proteasomes.

It is found in the cytoplasm. It carries out the reaction Hydrolysis of proteins to small peptides in the presence of ATP and magnesium. alpha-casein is the usual test substrate. In the absence of ATP, only oligopeptides shorter than five residues are hydrolyzed (such as succinyl-Leu-Tyr-|-NHMec, and Leu-Tyr-Leu-|-Tyr-Trp, in which cleavage of the -Tyr-|-Leu- and -Tyr-|-Trp bonds also occurs).. Functionally, cleaves peptides in various proteins in a process that requires ATP hydrolysis. Has a chymotrypsin-like activity. Plays a major role in the degradation of misfolded proteins. This Bacteroides thetaiotaomicron (strain ATCC 29148 / DSM 2079 / JCM 5827 / CCUG 10774 / NCTC 10582 / VPI-5482 / E50) protein is ATP-dependent Clp protease proteolytic subunit.